The following is a 259-amino-acid chain: MLTRRIIPCLDVRDGRTTKGIKFENNVDIGDPVEMAKVYYEAGADEIVFYDITASHEKRGLMIDVVRKVAETIFIPFSVGGGIRTVTDMRDTLLAGAEKISVNSSAVQNPAIISEGAEKFGSQCVVLGMDVKRVEKRKEIPSGFEIVINGGRTYMGIDALWWAREAQRLGAGEICLNSIDADGVCRGYDIELTRLISENVTIPVIASGGAGEPVHLHDALTEGRADAALIASMVHYGHHTIGGIKEYLDQRGVPVRMKW.

Active-site residues include aspartate 11 and aspartate 130.

It belongs to the HisA/HisF family. Heterodimer of HisH and HisF.

It localises to the cytoplasm. It carries out the reaction 5-[(5-phospho-1-deoxy-D-ribulos-1-ylimino)methylamino]-1-(5-phospho-beta-D-ribosyl)imidazole-4-carboxamide + L-glutamine = D-erythro-1-(imidazol-4-yl)glycerol 3-phosphate + 5-amino-1-(5-phospho-beta-D-ribosyl)imidazole-4-carboxamide + L-glutamate + H(+). It functions in the pathway amino-acid biosynthesis; L-histidine biosynthesis; L-histidine from 5-phospho-alpha-D-ribose 1-diphosphate: step 5/9. IGPS catalyzes the conversion of PRFAR and glutamine to IGP, AICAR and glutamate. The HisF subunit catalyzes the cyclization activity that produces IGP and AICAR from PRFAR using the ammonia provided by the HisH subunit. The protein is Imidazole glycerol phosphate synthase subunit HisF of Desulfosudis oleivorans (strain DSM 6200 / JCM 39069 / Hxd3) (Desulfococcus oleovorans).